The chain runs to 1433 residues: MNEIIVGEYKIHSLLKSFADKDEERNVYIVLNKSNEKFICKEIIYTQNSNIDNEKRKSEYINLKKFSDTIKYPHLNISKYIEHFIILENQQEKEKIKKQYIITEFYDGGDLSSLKITNKKCFSIKNGDIIYLFLKMLIIFKEFQTVIIHRDIKPDGSIVNDYYLCDLGSSTQVKTINSSTLIGTNQYIAPDVIKRGGYTGTIDIYGLGKTLLLLLNRVQQNQYNKINKILFEMMCSNESTERPTVDQLIEFMVCQYDNISFTEFDDFTHPLSKDCIEYFKNNKLNILKKDVKPIQIKIKIKEKEYRAYGAIQALLRNFYYIDNVISIEDNNNNNNNNNNNNNNNNNNNNNNNNNNNNNNNNNSDGPIEVAEFEWNENTDRLASELLLGHFKTETGGKNYEIANSHIEFVLKSEVLKSLSYHDEIVIDRQATPIYDNFINSDDSQAQIPPTSTKCIHIFSNHKYNFQKFIRDLPYGELTGDVQLKAIFHLILVIFEIAENGPDFMYNALLEKNMGTLFIIPPSSETTPRPPTPTATTTPTPTATTPTTTTATTTKLSQHNFKFLFPFRSYAFSHSSNTKLHIFLNIFGDHTKDGLIVDILKLAKELDKTKLPTVDIILQLIKMIQKEKCKLLETYSNSGLDFYFNNFETLIFNYELKESLTKLIDKNKIIHCVDSLNQILTTRYFYFVENHYKCYAIEPYKSLELISSFNENKNIYIRKLLHYSSFPSMKRFKYIQTYYDKVNNSHYFVFEIPKKLLNTTKKMELTKQSSSTTTKIDRMKIFKNLIVQHLNNIQELKTHLKSIYEYSFNLVISLEDDNKFELYYSNSVSPFSSDGFIRSFYDIGKWVFGNLNNQEEEGDQLVKMKSYFSFLRILSELSWFCNILGSGNVHNSIVYNELNIYYYLKMLLPLLNDIKINVFHYQIQNDIFAKIIIGNTQYNIINLIEPNHIDDPFSMVQYHLYIMELEKIETSDKFTCLRKQFNQRPQKQSKIFEIPNPNNSIDEILIEPTLIVQDINTSFQFFKVNGIIKTIEDFNQEKDYSNIIILRSFLYFLQYLFKNPSKTTLLVLFDIRKIDFDNINSSNDIDNESIPQYLCFDFLYFIKQMYGIDIYFQFEDFLEIISTRPSIVSNIIQSNKKKILNDIICMDIIENDISMKDVFYLLSVDIIKTISPTVNLVIYDKRYYIQKEVGSISKIREWKKFGIISSHPDAVVFLKYGKKDLKSAMLDNGKVNDENYYGIAVEDYMKSNELNILYYLLSKQEEPDFTNIERYYLENDKIYAMFPYVNGSCNLSEIDNLNEMDLLNILYQLCFQLHQLENLGIFHRDVKPENIISLRYGNGGIVVFIVDFGISQYKGKHLENYYSRDGTFGYQAPEIYREELRGDGDIKTQKYKMDVFSLGCTMAFLIKKFNITSTYLNDFIDNMTQPHVCKSFKK.

ATP contacts are provided by residues 1-4 (MNEI) and Lys-41. Residues 1–272 (MNEIIVGEYK…EFDDFTHPLS (272 aa)) form the Protein kinase 1 domain. Asp-151 serves as the catalytic Proton acceptor. Low complexity-rich tracts occupy residues 332–362 (NNNN…NNNN) and 533–550 (TATT…TTTA). 2 disordered regions span residues 332 to 366 (NNNN…SDGP) and 521 to 550 (PSSE…TTTA). The Protein kinase 2 domain maps to 1177-1433 (IYDKRYYIQK…QPHVCKSFKK (257 aa)).

This sequence belongs to the protein kinase superfamily. Ser/Thr protein kinase family.

The catalysed reaction is L-seryl-[protein] + ATP = O-phospho-L-seryl-[protein] + ADP + H(+). The enzyme catalyses L-threonyl-[protein] + ATP = O-phospho-L-threonyl-[protein] + ADP + H(+). This Dictyostelium discoideum (Social amoeba) protein is Probable serine/threonine-protein kinase DDB_G0277989.